The primary structure comprises 567 residues: MHGRLKVKTSEEQAEAKRLEREQKLKLYQSATQAVFQKRQAGELDESVLELTSQILGANPDFATLWNCRREVLQHLETEKSPEESAALVKAELGFLESCLRVNPKSYGTWHHRCWLLSRLPEPNWARELELCARFLEADERNFHCWDYRRFVAAQAAVAPAEELAFTDSLITRNFSNYSSWHYRSCLLPQLHPQPDSGPQGRLPENVLLKELELVQNAFFTDPNDQSAWFYHRWLLGRAEPHDVLCCVHVSREEACLSVCFSRPLTVGSRMGTLLLMVDEAPLSVEWRTPDGRNRPSHVWLCDLPAASLNDQLPQHTFRVIWTGSDSQKECVLLKDRPECWCRDSATDEQLFRCELSVEKSTVLQSELESCKELQELEPENKWCLLTIILLMRALDPLLYEKETLQYFSTLKAVDPMRAAYLDDLRSKFLLENSVLKMEYADVRVLHLAHKDLTVLCHLEQLLLVTHLDLSHNRLRALPPALAALRCLEVLQASDNALENVDGVANLPRLQELLLCNNRLQQSAAIQPLVSCPRLVLLNLQGNSLCQEEGIQERLAEMLPSVSSILT.

PFTA repeat units lie at residues 44 to 78 (LDES…HLET), 88 to 122 (LVKA…RLPE), 124 to 158 (NWAR…QAAV), 159 to 193 (APAE…QLHP), 207 to 241 (VLLK…RAEP), and 363 to 397 (VLQS…ALDP). S98 carries the phosphoserine modification. 5 LRR repeats span residues 442–463 (DVRV…EQLL), 464–486 (LVTH…AALR), 487–508 (CLEV…ANLP), 509–530 (RLQE…QPLV), and 534–555 (RLVL…QERL).

The protein belongs to the protein prenyltransferase subunit alpha family. In terms of assembly, heterotrimer composed of RABGGTA, RABGGTB and CHM; within this trimer, RABGGTA and RABGGTB form the catalytic component B, while CHM (component A) mediates peptide substrate binding. The Rab GGTase dimer (RGGT) interacts with CHM (component A) prior to Rab protein binding; the association is stabilized by geranylgeranyl pyrophosphate (GGpp). The CHM:RGGT:Rab complex is destabilized by GGpp. Interacts with non-phosphorylated form of RAB8A; phosphorylation of RAB8A at 'Thr-72' disrupts this interaction. In terms of tissue distribution, most abundant in the heart, brain, spleen and liver. Less in the lung, muscle, kidney and testis; in these tissues less abundant than the beta subunit.

It catalyses the reaction geranylgeranyl diphosphate + L-cysteinyl-[protein] = S-geranylgeranyl-L-cysteinyl-[protein] + diphosphate. The enzymatic reaction requires the aid of a Rab escort protein (also called component A), such as CHM. Catalyzes the transfer of a geranylgeranyl moiety from geranylgeranyl diphosphate to both cysteines of Rab proteins with the C-terminal sequence -XXCC, -XCXC and -CCXX, such as RAB1A, RAB3A, RAB5A and RAB7A. The polypeptide is Geranylgeranyl transferase type-2 subunit alpha (Rabggta) (Rattus norvegicus (Rat)).